The sequence spans 97 residues: YcgL domain-containing protein CPS_3517 (97 aa).

Positions 1–85 (MLCAIYKSAR…PQEDLLKEHK (85 aa)) constitute a YcgL domain.

This chain is YcgL domain-containing protein CPS_3517, found in Colwellia psychrerythraea (strain 34H / ATCC BAA-681) (Vibrio psychroerythus).